The following is a 787-amino-acid chain: Integrin beta-6 (787 aa).

The first 21 residues, 1-21, serve as a signal peptide directing secretion; it reads MGIELVCLFLLLLGRNDHVQG. Residues 22–71 enclose the PSI domain; that stretch reads GCAWSGAETCSDCLLTGPHCAWCSQENFTHLSGAGERCDTPENLLAKGCQ. At 22–708 the chain is on the extracellular side; that stretch reads GCAWSGAETC…KDCPKPPNIP (687 aa). Disulfide bonds link Cys23/Cys41, Cys31/Cys454, Cys34/Cys59, Cys44/Cys70, Cys197/Cys204, Cys252/Cys293, Cys394/Cys406, Cys426/Cys452, Cys456/Cys476, Cys467/Cys479, Cys481/Cys490, Cys492/Cys519, Cys502/Cys517, Cys511/Cys522, Cys524/Cys537, Cys539/Cys560, Cys544/Cys558, Cys552/Cys563, and Cys565/Cys574. Asn48 and Asn97 each carry an N-linked (GlcNAc...) asparagine glycan. The 241-residue stretch at 131–371 folds into the VWFA domain; that stretch reads YPVDLYYLMD…QLIISAYEEL (241 aa). 3 residues coordinate Mg(2+): Asp140, Ser142, and Ser144. Residues Ser144, Asp147, Asp148, and Glu179 each contribute to the Ca(2+) site. Ca(2+) is bound by residues Asn235, Asp237, Pro239, and Glu240. Glu240 is a binding site for Mg(2+). A glycan (N-linked (GlcNAc...) asparagine) is linked at Asn260. Residues Asp271 and Lys355 each coordinate Ca(2+). Asn387 is a glycosylation site (N-linked (GlcNAc...) asparagine). A glycan (N-linked (GlcNAc...) asparagine) is linked at Asn418. I-EGF domains are found at residues 456–491, 492–538, 539–575, and 576–615; these read CQRE…PRCE, CGED…PYCQ, CDNF…EYCN, and CTTS…PTCE. Asn463 and Asn471 each carry an N-linked (GlcNAc...) asparagine glycan. An N-linked (GlcNAc...) asparagine glycan is attached at Asn541. Asn575 is a glycosylation site (N-linked (GlcNAc...) asparagine). 9 disulfides stabilise this stretch: Cys576/Cys599, Cys583/Cys597, Cys591/Cys602, Cys604/Cys614, Cys617/Cys620, Cys624/Cys669, Cys630/Cys649, Cys633/Cys645, and Cys677/Cys701. Asn695 is a glycosylation site (N-linked (GlcNAc...) asparagine). The helical transmembrane segment at 709-729 threads the bilayer; the sequence is MIMLGVSLAILLIGVVLLCIW. The tract at residues 730–757 is interaction with HAX1; sequence KLLVSFHDRKEVAKFEAERSKAKWQTGT. Residues 730-787 lie on the Cytoplasmic side of the membrane; sequence KLLVSFHDRKEVAKFEAERSKAKWQTGTNPLYRGSTSTFKNVTYKHREKHKVGLSSDG.

This sequence belongs to the integrin beta chain family. In terms of assembly, heterodimer of an alpha and a beta subunit. Interacts with FLNB. Interacts with HAX1. ITGAV:ITGB6 interacts with FBN1. ITGAV:ITGB6 interacts with TGFB1.

Its subcellular location is the cell membrane. The protein resides in the cell junction. It is found in the focal adhesion. Integrin alpha-V:beta-6 (ITGAV:ITGB6) is a receptor for fibronectin and cytotactin. It recognizes the sequence R-G-D in its ligands. ITGAV:ITGB6 acts as a receptor for fibrillin-1 (FBN1) and mediates R-G-D-dependent cell adhesion to FBN1. Integrin alpha-V:beta-6 (ITGAV:ITGB6) mediates R-G-D-dependent release of transforming growth factor beta-1 (TGF-beta-1) from regulatory Latency-associated peptide (LAP), thereby playing a key role in TGF-beta-1 activation. This is Integrin beta-6 (Itgb6) from Rattus norvegicus (Rat).